A 102-amino-acid polypeptide reads, in one-letter code: Small ribosomal subunit protein uS10 (102 aa).

It belongs to the universal ribosomal protein uS10 family. As to quaternary structure, part of the 30S ribosomal subunit.

Functionally, involved in the binding of tRNA to the ribosomes. This is Small ribosomal subunit protein uS10 from Streptococcus suis (strain 98HAH33).